Here is a 404-residue protein sequence, read N- to C-terminus: Cysteine desulfurase IscS (404 aa).

Pyridoxal 5'-phosphate contacts are provided by residues 75–76 (AT), Asn155, Gln183, and 203–205 (SAH). Residue Lys206 is modified to N6-(pyridoxal phosphate)lysine. Thr243 is a binding site for pyridoxal 5'-phosphate. The active-site Cysteine persulfide intermediate is Cys328. Residue Cys328 coordinates [2Fe-2S] cluster.

Belongs to the class-V pyridoxal-phosphate-dependent aminotransferase family. NifS/IscS subfamily. As to quaternary structure, homodimer. Forms a heterotetramer with IscU, interacts with other sulfur acceptors. Pyridoxal 5'-phosphate serves as cofactor.

It is found in the cytoplasm. The enzyme catalyses (sulfur carrier)-H + L-cysteine = (sulfur carrier)-SH + L-alanine. The protein operates within cofactor biosynthesis; iron-sulfur cluster biosynthesis. In terms of biological role, master enzyme that delivers sulfur to a number of partners involved in Fe-S cluster assembly, tRNA modification or cofactor biosynthesis. Catalyzes the removal of elemental sulfur atoms from cysteine to produce alanine. Functions as a sulfur delivery protein for Fe-S cluster synthesis onto IscU, an Fe-S scaffold assembly protein, as well as other S acceptor proteins. The polypeptide is Cysteine desulfurase IscS (Neisseria meningitidis serogroup C (strain 053442)).